The chain runs to 276 residues: Large ribosomal subunit protein uL2 (276 aa).

Residues 203 to 276 (NVSSGKAGRT…SDKFIVKRRK (74 aa)) form a disordered region. The segment covering 210–220 (GRTRWLGRRPQ) has biased composition (basic residues). A compositionally biased stretch (basic and acidic residues) spans 265-276 (KPSDKFIVKRRK).

The protein belongs to the universal ribosomal protein uL2 family. Part of the 50S ribosomal subunit. Forms a bridge to the 30S subunit in the 70S ribosome.

In terms of biological role, one of the primary rRNA binding proteins. Required for association of the 30S and 50S subunits to form the 70S ribosome, for tRNA binding and peptide bond formation. It has been suggested to have peptidyltransferase activity; this is somewhat controversial. Makes several contacts with the 16S rRNA in the 70S ribosome. In Coprothermobacter proteolyticus (strain ATCC 35245 / DSM 5265 / OCM 4 / BT), this protein is Large ribosomal subunit protein uL2.